A 545-amino-acid polypeptide reads, in one-letter code: High-molecular-weight cytochrome c (545 aa).

The N-terminal stretch at M1–T31 is a signal peptide. Heme c is bound by residues H66, H69, C80, C83, H84, H111, C114, C117, H118, C135, C138, H139, H159, H162, C178, C181, H182, H183, C202, C205, H206, H222, C225, C228, H229, C244, C247, H248, H298, H301, C308, C311, H312, H313, C319, C322, H323, H341, C349, C352, H353, C362, C365, H366, C378, C381, H382, H449, H470, C477, C480, H481, H482, C493, C496, H497, H516, C519, C522, H523, C536, C539, and H540.

Monomer. Binds 16 heme c groups per subunit. High-spin heme 15 has single axial histidine ligand and the other hemes are low-spin bis-histidinyl coordinated.

It localises to the periplasm. HMWC (high-molecular-weight cytochrome c), ORF2, ORF3, ORF4, ORF5 and ORF6 in the HMC operon form a transmembrane protein complex that allows electron flow from the periplasmic hydrogenase to the cytoplasmic enzymes that catalyze reduction of sulfates. The polypeptide is High-molecular-weight cytochrome c (hmcA) (Nitratidesulfovibrio vulgaris (strain ATCC 29579 / DSM 644 / CCUG 34227 / NCIMB 8303 / VKM B-1760 / Hildenborough) (Desulfovibrio vulgaris)).